The following is a 92-amino-acid chain: CRISPR-associated endoribonuclease Cas2 3 (92 aa).

D9 lines the Mg(2+) pocket.

It belongs to the CRISPR-associated endoribonuclease Cas2 protein family. In terms of assembly, homodimer, forms a heterotetramer with a Cas1 homodimer. It depends on Mg(2+) as a cofactor.

Functionally, CRISPR (clustered regularly interspaced short palindromic repeat), is an adaptive immune system that provides protection against mobile genetic elements (viruses, transposable elements and conjugative plasmids). CRISPR clusters contain sequences complementary to antecedent mobile elements and target invading nucleic acids. CRISPR clusters are transcribed and processed into CRISPR RNA (crRNA). Functions as a ssRNA-specific endoribonuclease. Involved in the integration of spacer DNA into the CRISPR cassette. This chain is CRISPR-associated endoribonuclease Cas2 3, found in Synechocystis sp. (strain ATCC 27184 / PCC 6803 / Kazusa).